Reading from the N-terminus, the 291-residue chain is Probable aquaporin PIP2-4 (291 aa).

At M1 the chain carries N-acetylmethionine. Residues 1-22 (MAKDLDVNESGPPAARDYKDPP) form a disordered region. A2 is subject to N-acetylalanine; in Probable aquaporin PIP2-4, N-terminally processed. Residues 2 to 39 (AKDLDVNESGPPAARDYKDPPPAPFFDMEELRKWPLYR) lie on the Cytoplasmic side of the membrane. K3 bears the N6,N6-dimethyllysine mark. Residues 40 to 60 (AVIAEFVATLLFLYVSILTVI) form a helical membrane-spanning segment. Topologically, residues 61–74 (GYKAQTDATAGGVD) are extracellular. Residues 75 to 95 (CGGVGILGIAWAFGGMIFVLV) traverse the membrane as a helical segment. The Cytoplasmic portion of the chain corresponds to 96 to 125 (YCTAGISGGHINPAVTVGLFLARKVSLVRT). The NPA 1 motif lies at 107 to 109 (NPA). The helical transmembrane segment at 126–146 (VLYIVAQCLGAICGCGFVKAF) threads the bilayer. Topologically, residues 147–167 (QSSYYTRYGGGANELADGYNK) are extracellular. A helical membrane pass occupies residues 168–188 (GTGLGAEIIGTFVLVYTVFSA). Residues 189 to 201 (TDPKRNARDSHVP) are Cytoplasmic-facing. Residues 202–222 (VLAPLPIGFAVFMVHLATIPI) traverse the membrane as a helical segment. Residues 223–249 (TGTGINPARSFGAAVIYNNEKAWDDQW) are Extracellular-facing. Positions 228–230 (NPA) match the NPA 2 motif. The chain crosses the membrane as a helical span at residues 250–270 (IFWVGPMIGAAAAAFYHQFIL). Topologically, residues 271-291 (RAAAIKALGSFGSFGSFRSFA) are cytoplasmic. 3 positions are modified to phosphoserine: S283, S286, and S289.

The protein belongs to the MIP/aquaporin (TC 1.A.8) family. PIP (TC 1.A.8.11) subfamily. Expressed in roots.

Its subcellular location is the cell membrane. Aquaporins facilitate the transport of water and small neutral solutes across cell membranes. The polypeptide is Probable aquaporin PIP2-4 (PIP2-4) (Arabidopsis thaliana (Mouse-ear cress)).